Reading from the N-terminus, the 270-residue chain is Putative phosphoenolpyruvate synthase regulatory protein (270 aa).

150–157 (GVSRCGKT) contributes to the ADP binding site.

This sequence belongs to the pyruvate, phosphate/water dikinase regulatory protein family. PSRP subfamily.

It catalyses the reaction [pyruvate, water dikinase] + ADP = [pyruvate, water dikinase]-phosphate + AMP + H(+). The catalysed reaction is [pyruvate, water dikinase]-phosphate + phosphate + H(+) = [pyruvate, water dikinase] + diphosphate. Its function is as follows. Bifunctional serine/threonine kinase and phosphorylase involved in the regulation of the phosphoenolpyruvate synthase (PEPS) by catalyzing its phosphorylation/dephosphorylation. The protein is Putative phosphoenolpyruvate synthase regulatory protein of Shewanella loihica (strain ATCC BAA-1088 / PV-4).